We begin with the raw amino-acid sequence, 137 residues long: Proofreading thioesterase EntH (137 aa).

Glu-63 serves as the catalytic Nucleophile or proton acceptor.

Belongs to the thioesterase PaaI family. Homotetramer. Dimer of dimers. Interacts specifically with the aryl carrier protein (ArCP) domain of EntB.

It localises to the cytoplasm. It participates in siderophore biosynthesis; enterobactin biosynthesis. Its function is as follows. Required for optimal enterobactin synthesis. Acts as a proofreading enzyme that prevents EntB misacylation by hydrolyzing the thioester bound existing between EntB and wrongly charged molecules. The sequence is that of Proofreading thioesterase EntH from Escherichia coli O6:H1 (strain CFT073 / ATCC 700928 / UPEC).